The following is a 339-amino-acid chain: MSEEYTEKFKEAKDKILKAQSLNELEEVKRIYLGKQGFLTQILRSIGKMPQEERAKWGRLANEWKEELETLYENKERELKYLTLQKKLEGEKIDITLPGRRKILGRIHPINQVIEEIVTVFKEMGFQVVYGPELETDYYNFTALNIPSDHPVRESHDSFYIDKEHLLRTQTSPVQIRVMEKKKPPLRVVAPGKCYRRDMPDATHSPMFHQIEGLAVDTDITFAELKGVLTIFAHRLFGKERKVYFIPSYFPFTEPSAEMYVECGVCKGVGCKACGYSGVLEILGCGMVHPEVFRIVGIDPEKYTGFAFGMGPDRIAMQIYGIDDIRLFYENDIRFLKQF.

A Mg(2+)-binding site is contributed by glutamate 254.

This sequence belongs to the class-II aminoacyl-tRNA synthetase family. Phe-tRNA synthetase alpha subunit type 1 subfamily. Tetramer of two alpha and two beta subunits. Mg(2+) is required as a cofactor.

It is found in the cytoplasm. It carries out the reaction tRNA(Phe) + L-phenylalanine + ATP = L-phenylalanyl-tRNA(Phe) + AMP + diphosphate + H(+). This chain is Phenylalanine--tRNA ligase alpha subunit, found in Dictyoglomus thermophilum (strain ATCC 35947 / DSM 3960 / H-6-12).